The chain runs to 330 residues: Probable cell division protein WhiA (330 aa).

The segment at residues 275 to 308 (SLDELGRLSDPPLTKDAIAGRIRRLLAMADRRAE) is a DNA-binding region (H-T-H motif).

Belongs to the WhiA family.

Functionally, involved in cell division and chromosome segregation. The polypeptide is Probable cell division protein WhiA (Kocuria rhizophila (strain ATCC 9341 / DSM 348 / NBRC 103217 / DC2201)).